The chain runs to 561 residues: Transmembrane protein 151B (561 aa).

Residues 1–10 show a composition bias toward low complexity; the sequence is MSPPGSAAGE. The segment at 1–42 is disordered; that stretch reads MSPPGSAAGESAGGGGGGGGSGVPEEPMASADEGPAREEQRP. Over residues 11-22 the composition is skewed to gly residues; that stretch reads SAGGGGGGGGSG. The next 2 membrane-spanning stretches (helical) occupy residues 59 to 79 and 106 to 126; these read CLLL…CHVT and YVYI…VECW. Positions 489-507 are enriched in polar residues; sequence VNEASCPTEQTRLSSQASM. Residues 489–523 form a disordered region; that stretch reads VNEASCPTEQTRLSSQASMRDNEEDEDEEEAGPPP. The span at 510-519 shows a compositional bias: acidic residues; that stretch reads NEEDEDEEEA.

This sequence belongs to the TMEM151 family.

It is found in the membrane. The sequence is that of Transmembrane protein 151B (Tmem151b) from Mus musculus (Mouse).